The following is a 638-amino-acid chain: Actin-regulating kinase 1 (638 aa).

The Protein kinase domain occupies 22–298 (VEIIKYLTSG…VYQLLKRISI (277 aa)). ATP contacts are provided by residues 28 to 36 (LTSGGFAQV) and Lys56. Asp159 functions as the Proton acceptor in the catalytic mechanism. Residue Ser478 is modified to Phosphoserine. Over residues 482 to 515 (YSTRGNIKKNQSVKESLTSSSLPGTSFTPTSTKV) the composition is skewed to polar residues. Residues 482–518 (YSTRGNIKKNQSVKESLTSSSLPGTSFTPTSTKVNLK) form a disordered region. Phosphoserine is present on residues Ser522 and Ser535. A disordered region spans residues 569 to 638 (SEESFNARKM…LAGRKLSLDK (70 aa)). The segment covering 582 to 593 (KLHEKGEIDKPT) has biased composition (basic and acidic residues). The interval 602–615 (SKDKKTKPTPPPKP) is interaction with SH3 domain of ABP1.

This sequence belongs to the protein kinase superfamily. Ser/Thr protein kinase family. In terms of assembly, interacts with ABP1, which is required for proper actin patch localization.

It localises to the cytoplasm. It is found in the cytoskeleton. The protein resides in the actin patch. It carries out the reaction L-seryl-[protein] + ATP = O-phospho-L-seryl-[protein] + ADP + H(+). The enzyme catalyses L-threonyl-[protein] + ATP = O-phospho-L-threonyl-[protein] + ADP + H(+). Involved in regulation of actin cytoskeleton organization and endocytosis. In Saccharomyces cerevisiae (strain ATCC 204508 / S288c) (Baker's yeast), this protein is Actin-regulating kinase 1 (ARK1).